Reading from the N-terminus, the 225-residue chain is Peptidyl-tRNA hydrolase (225 aa).

Tyr-14 is a binding site for tRNA. His-19 (proton acceptor) is an active-site residue. TRNA contacts are provided by Phe-64, Asn-66, and Asn-112. The segment at 184–225 (ALRMQPPKPEKPKPAAKAPEAQAPEAAPDARSALQKLADRFR) is disordered. Residues 198–210 (AAKAPEAQAPEAA) are compositionally biased toward low complexity.

The protein belongs to the PTH family. As to quaternary structure, monomer.

It localises to the cytoplasm. It carries out the reaction an N-acyl-L-alpha-aminoacyl-tRNA + H2O = an N-acyl-L-amino acid + a tRNA + H(+). Hydrolyzes ribosome-free peptidyl-tRNAs (with 1 or more amino acids incorporated), which drop off the ribosome during protein synthesis, or as a result of ribosome stalling. In terms of biological role, catalyzes the release of premature peptidyl moieties from peptidyl-tRNA molecules trapped in stalled 50S ribosomal subunits, and thus maintains levels of free tRNAs and 50S ribosomes. This Cereibacter sphaeroides (strain KD131 / KCTC 12085) (Rhodobacter sphaeroides) protein is Peptidyl-tRNA hydrolase.